The chain runs to 487 residues: 1,4-beta-D-glucan cellobiohydrolase CEL6A (487 aa).

An N-terminal signal peptide occupies residues 1–17 (MASKLFLAAALLQGALS). One can recognise a CBM1 domain in the interval 27-63 (ACAAQWGQCGGQDYTGPTCCQSGSTCVVSNQWYSQCL). 2 disulfide bridges follow: cysteine 35–cysteine 52 and cysteine 46–cysteine 62. Over residues 64–117 (PGSSNPTTTSRTSTSSSSSTSRTSSSTSRPPSSVPTTPTSVPPTITTTPTTTPT) the composition is skewed to low complexity. A disordered region spans residues 64-127 (PGSSNPTTTS…GGSGPGTTAS (64 aa)). 2 residues coordinate substrate: tryptophan 175 and aspartate 177. The active site involves aspartate 216. Aspartate 262 functions as the Proton donor in the catalytic mechanism. Positions 307, 310, 346, 407, 435, and 439 each coordinate substrate. The Proton acceptor role is filled by aspartate 441.

This sequence belongs to the glycosyl hydrolase 6 (cellulase B) family.

The protein resides in the secreted. The catalysed reaction is Hydrolysis of (1-&gt;4)-beta-D-glucosidic linkages in cellulose and cellotetraose, releasing cellobiose from the non-reducing ends of the chains.. Functionally, exoglucanase that plays an important function in biomass degradation by catalyzing the hydrolysis of the non-reducing end beta-1,4-glucosidic linkages in cellulose and cellotetraose to release cellobiose. Shows higher hydrolytic activities on phosphoric acid-swollen cellulose (PSC), beta-glucan, and cellooligosaccharide derivatives than on cellulose, of which the best substrates were cellooligosaccharides. The chain is 1,4-beta-D-glucan cellobiohydrolase CEL6A from Pyricularia oryzae (strain 70-15 / ATCC MYA-4617 / FGSC 8958) (Rice blast fungus).